Here is a 395-residue protein sequence, read N- to C-terminus: Proteinase-activated receptor 2 (395 aa).

Residues 1–25 (MRSPSAAWLLGGVLLLAASGSCNRT) form the signal peptide. Asn-23 and Asn-29 each carry an N-linked (GlcNAc...) asparagine glycan. The propeptide at 26 to 34 (VPGNKSKGR) is removed for receptor activation. At 35 to 69 (SLIGNVDNSPVVAGRGVTVKPGFSVDEFSTSVLTG) the chain is on the extracellular side. A helical membrane pass occupies residues 70 to 99 (KLTTVFLPVVYTIVFVVGLPSNGMALWVFL). Residues 100 to 106 (FRTKKKH) lie on the Cytoplasmic side of the membrane. Residues 107 to 135 (PAVIYMANLALADLLSVTWFPLKIAYHIH) form a helical membrane-spanning segment. Residues 136–147 (GNNWIYGESLCK) lie on the Extracellular side of the membrane. An intrachain disulfide couples Cys-146 to Cys-224. The helical transmembrane segment at 148 to 175 (VLIGFFYGNMYCSILFMTCLSVQRYWVI) threads the bilayer. Topologically, residues 176-181 (VNPMVH) are cytoplasmic. The helical transmembrane segment at 182-209 (PKKQANIAIGVSLGIWLLILLLTIPLYV) threads the bilayer. At 210-233 (VKQTSYIRALNITTCHDVLPEEVL) the chain is on the extracellular side. An N-linked (GlcNAc...) asparagine glycan is attached at Asn-220. Residues 234-267 (VGDMFNYFLSLAIGVFLFPAFLTASAYVLMIRTL) traverse the membrane as a helical segment. The Cytoplasmic portion of the chain corresponds to 268–275 (QSSAMDES). The chain crosses the membrane as a helical span at residues 276–315 (SGKKRRRAIKLIVTVLAMYLICFTPSNLLLVVHYFLIKTR). The Extracellular segment spans residues 316-321 (GQSHVY). The chain crosses the membrane as a helical span at residues 322–345 (ALYIVALCLSTLNSCIDPFVYYFI). Residues 346–395 (SQDFRDHAKNALLCRSVRTVKRMQVSLSSKKFSGKSSSYSSSSTSVKGSY) lie on the Cytoplasmic side of the membrane. Cys-359 carries the S-palmitoyl cysteine lipid modification.

The protein belongs to the G-protein coupled receptor 1 family. As to quaternary structure, interacts with TLR4, COPS5 and TMED2. Interacts with GNAQ, GNA11, GNA12, GNA13 and GNA14. In terms of processing, a proteolytic cleavage generates a new N-terminus that functions as a tethered ligand. Activating serine proteases include trypsin, mast cell tryptase, coagulation factors VII and Xa, myeloblastin/PRTN3 and membrane-type serine protease 1/ST14. Proposed subsequent cleavage by serine proteases is leading to receptor deactivation and include neutrophil elastase and cathepsin G. At least in part, implicated proteases are also shown to activate the receptor; the glycosylation status of the receptor is thought to contribute to the difference. Post-translationally, N-glycosylated and sialylated. Multiple phosphorylated on serine and threonine residues in the cytoplasmic region upon receptor activation; required for receptor desensitization and recruitment of beta-arrestin. In terms of processing, monoubiquitinated by CBL at the plasma membrane and in early endosomes; not required for receptor endocytosis but for translocation to late endosomes or lysosomes. Deubiquitination involves STAMBP and USP8; required for lysosomal trafficking and receptor degradation.

It localises to the cell membrane. Receptor for trypsin and trypsin-like enzymes coupled to G proteins. Its function is mediated through the activation of several signaling pathways including phospholipase C (PLC), intracellular calcium, mitogen-activated protein kinase (MAPK), I-kappaB kinase/NF-kappaB and Rho. Can also be transactivated by cleaved F2R/PAR1. Involved in modulation of inflammatory responses and regulation of innate and adaptive immunity, and acts as a sensor for proteolytic enzymes generated during infection. Generally is promoting inflammation. Can signal synergistically with TLR4 and probably TLR2 in inflammatory responses and modulates TLR3 signaling. Has a protective role in establishing the endothelial barrier; the activity involves coagulation factor X. Regulates endothelial cell barrier integrity during neutrophil extravasation, probably following proteolytic cleavage by PRTN3. Proposed to have a bronchoprotective role in airway epithelium, but also shown to compromise the airway epithelial barrier by interrupting E-cadherin adhesion. Involved in the regulation of vascular tone; activation results in hypotension presumably mediated by vasodilation. Associates with a subset of G proteins alpha subunits such as GNAQ, GNA11, GNA14, GNA12 and GNA13, but probably not with G(o) alpha, G(i) subunit alpha-1 and G(i) subunit alpha-2. Believed to be a class B receptor which internalizes as a complex with arrestin and traffic with it to endosomal vesicles, presumably as desensitized receptor, for extended periods of time. Mediates inhibition of TNF-alpha stimulated JNK phosphorylation via coupling to GNAQ and GNA11; the function involves dissociation of RIPK1 and TRADD from TNFR1. Mediates phosphorylation of nuclear factor NF-kappa-B RELA subunit at 'Ser-536'; the function involves IKBKB and is predominantly independent of G proteins. Involved in cellular migration. Involved in cytoskeletal rearrangement and chemotaxis through beta-arrestin-promoted scaffolds; the function is independent of GNAQ and GNA11 and involves promotion of cofilin dephosphorylation and actin filament severing. Induces redistribution of COPS5 from the plasma membrane to the cytosol and activation of the JNK cascade is mediated by COPS5. Involved in the recruitment of leukocytes to the sites of inflammation and is the major PAR receptor capable of modulating eosinophil function such as pro-inflammatory cytokine secretion, superoxide production and degranulation. During inflammation promotes dendritic cell maturation, trafficking to the lymph nodes and subsequent T-cell activation. Involved in antimicrobial response of innate immune cells; activation enhances phagocytosis of Gram-positive and killing of Gram-negative bacteria. Acts synergistically with interferon-gamma in enhancing antiviral responses. Probably mediates activation of pro-inflammatory and pro-fibrotic responses in fibroblasts, triggered by coagulation factor Xa (F10). Probably mediates activation of barrier protective signaling responses in endothelial cells, triggered by coagulation factor Xa (F10). This Bos taurus (Bovine) protein is Proteinase-activated receptor 2 (F2RL1).